Reading from the N-terminus, the 109-residue chain is Probable gas vesicle protein J1 (109 aa).

It belongs to the gas vesicle GvpA family. As to quaternary structure, interacts with GvpA.

It is found in the gas vesicle. Its function is as follows. A minor component of the gas vesicle, might be involved in nucleating gas vesicle formation. Gas vesicles (GV) are hollow, gas filled proteinaceous nanostructures. It is not clear what function GVs perform in soil bacteria. The polypeptide is Probable gas vesicle protein J1 (gvpJ1) (Streptomyces coelicolor (strain ATCC BAA-471 / A3(2) / M145)).